The sequence spans 231 residues: Probable septum site-determining protein MinC (231 aa).

Residues 102–125 (KEKAPRPAPAPQAPAQNTTPVTKT) are disordered.

It belongs to the MinC family. As to quaternary structure, interacts with MinD and FtsZ.

In terms of biological role, cell division inhibitor that blocks the formation of polar Z ring septums. Rapidly oscillates between the poles of the cell to destabilize FtsZ filaments that have formed before they mature into polar Z rings. Prevents FtsZ polymerization. This chain is Probable septum site-determining protein MinC, found in Escherichia coli O6:K15:H31 (strain 536 / UPEC).